A 200-amino-acid chain; its full sequence is Rho-related protein racD (200 aa).

Residues A20, G22, K23, T24, C25, Y39, and T42 each coordinate GTP. Residue T24 coordinates Mg(2+). 2 short sequence motifs (switch) span residues 33 to 44 (NEFPKDYVPTVF) and 64 to 82 (DTAG…YPNT). A Mg(2+)-binding site is contributed by T42. Positions 123, 125, and 166 each coordinate GTP. C197 carries the cysteine methyl ester modification. C197 carries the S-geranylgeranyl cysteine lipid modification. The propeptide at 198-200 (ALL) is removed in mature form.

The protein belongs to the small GTPase superfamily. Rho family. The cofactor is Mg(2+).

It localises to the cell membrane. It is found in the cytoplasm. The protein localises to the cytoskeleton. The catalysed reaction is GTP + H2O = GDP + phosphate + H(+). Its activity is regulated as follows. Regulated by guanine nucleotide exchange factors (GEFs) which promote the exchange of bound GDP for free GTP, GTPase activating proteins (GAPs) which increase the GTP hydrolysis activity, and GDP dissociation inhibitors which inhibit the dissociation of the nucleotide from the GTPase. Its function is as follows. Small GTPase which cycles between active GTP-bound and inactive GDP-bound states. The protein is Rho-related protein racD of Entamoeba histolytica (strain ATCC 30459 / HM-1:IMSS / ABRM).